We begin with the raw amino-acid sequence, 311 residues long: Chalcone synthase 4 (311 aa).

Residue C164 is part of the active site.

This sequence belongs to the thiolase-like superfamily. Chalcone/stilbene synthases family.

It carries out the reaction (E)-4-coumaroyl-CoA + 3 malonyl-CoA + 3 H(+) = 2',4,4',6'-tetrahydroxychalcone + 3 CO2 + 4 CoA. Its pathway is secondary metabolite biosynthesis; flavonoid biosynthesis. In terms of biological role, the primary product of this enzyme is 4,2',4',6'-tetrahydroxychalcone (also termed naringenin-chalcone or chalcone) which can under specific conditions spontaneously isomerize into naringenin. The sequence is that of Chalcone synthase 4 (CHS4) from Trifolium subterraneum (Subterranean clover).